We begin with the raw amino-acid sequence, 202 residues long: Methylthioribulose-1-phosphate dehydratase (202 aa).

Zn(2+) contacts are provided by histidine 93 and histidine 95.

This sequence belongs to the aldolase class II family. MtnB subfamily. The cofactor is Zn(2+).

The catalysed reaction is 5-(methylsulfanyl)-D-ribulose 1-phosphate = 5-methylsulfanyl-2,3-dioxopentyl phosphate + H2O. It functions in the pathway amino-acid biosynthesis; L-methionine biosynthesis via salvage pathway; L-methionine from S-methyl-5-thio-alpha-D-ribose 1-phosphate: step 2/6. Its function is as follows. Catalyzes the dehydration of methylthioribulose-1-phosphate (MTRu-1-P) into 2,3-diketo-5-methylthiopentyl-1-phosphate (DK-MTP-1-P). The chain is Methylthioribulose-1-phosphate dehydratase from Klebsiella pneumoniae (strain 342).